A 165-amino-acid chain; its full sequence is Lipoprotein signal peptidase (165 aa).

Transmembrane regions (helical) follow at residues 6–26 (SSVE…LLII), 68–88 (GKID…LFYF), and 95–115 (ISFL…GNMI). Catalysis depends on residues Asp125 and Asp141. Residues 132–152 (IWSFIFNFADVWINIGVVLII) traverse the membrane as a helical segment.

The protein belongs to the peptidase A8 family.

The protein resides in the cell inner membrane. The enzyme catalyses Release of signal peptides from bacterial membrane prolipoproteins. Hydrolyzes -Xaa-Yaa-Zaa-|-(S,diacylglyceryl)Cys-, in which Xaa is hydrophobic (preferably Leu), and Yaa (Ala or Ser) and Zaa (Gly or Ala) have small, neutral side chains.. It participates in protein modification; lipoprotein biosynthesis (signal peptide cleavage). Its function is as follows. This protein specifically catalyzes the removal of signal peptides from prolipoproteins. The protein is Lipoprotein signal peptidase of Fusobacterium nucleatum subsp. nucleatum (strain ATCC 25586 / DSM 15643 / BCRC 10681 / CIP 101130 / JCM 8532 / KCTC 2640 / LMG 13131 / VPI 4355).